Consider the following 166-residue polypeptide: NAD(P)H-quinone oxidoreductase subunit I, chloroplastic (166 aa).

2 consecutive 4Fe-4S ferredoxin-type domains span residues 55 to 84 (GRIHFEFDKCIACEVCVRVCPIDLPVVDWK) and 95 to 124 (LNYSIDFGICIFCGNCVEYCPTNCLSMTEE). [4Fe-4S] cluster is bound by residues Cys-64, Cys-67, Cys-70, Cys-74, Cys-104, Cys-107, Cys-110, and Cys-114.

Belongs to the complex I 23 kDa subunit family. In terms of assembly, NDH is composed of at least 16 different subunits, 5 of which are encoded in the nucleus. [4Fe-4S] cluster serves as cofactor.

It localises to the plastid. Its subcellular location is the chloroplast thylakoid membrane. The catalysed reaction is a plastoquinone + NADH + (n+1) H(+)(in) = a plastoquinol + NAD(+) + n H(+)(out). It catalyses the reaction a plastoquinone + NADPH + (n+1) H(+)(in) = a plastoquinol + NADP(+) + n H(+)(out). Functionally, NDH shuttles electrons from NAD(P)H:plastoquinone, via FMN and iron-sulfur (Fe-S) centers, to quinones in the photosynthetic chain and possibly in a chloroplast respiratory chain. The immediate electron acceptor for the enzyme in this species is believed to be plastoquinone. Couples the redox reaction to proton translocation, and thus conserves the redox energy in a proton gradient. The sequence is that of NAD(P)H-quinone oxidoreductase subunit I, chloroplastic from Picradeniopsis absinthifolia (Hairyseed bahia).